The primary structure comprises 377 residues: Palmitoyltransferase ZDHHC16 (377 aa).

Residues 1-77 (MRGQRSLLLG…VYWLVDNVIR (77 aa)) lie on the Cytoplasmic side of the membrane. The helical transmembrane segment at 78–98 (WFGVVFVVLVIVLTGSIVAIA) threads the bilayer. Residues 99–116 (YLCVLPLILRTYSVPRLC) are Lumenal-facing. The chain crosses the membrane as a helical span at residues 117–137 (WHFFYSHWNLILIVFHYYQAI). At 138–198 (TTPPGYPPQG…NNCVGHYNHR (61 aa)) the chain is on the cytoplasmic side. Positions 155–205 (SICKKCIYPKPARTHHCSICNRCVLKMDHHCPWLNNCVGHYNHRYFFSFCF) constitute a DHHC domain. C185 (S-palmitoyl cysteine intermediate) is an active-site residue. The chain crosses the membrane as a helical span at residues 199 to 219 (YFFSFCFFMTLGCVYCSYGSW). The Lumenal segment spans residues 220-266 (DLFREAYAAIEKMKQLDKNKLQAVANQTYHQTPPPTFSFRERMTHKS). A helical transmembrane segment spans residues 267-287 (LVYLWFLCSSVALALGALTVW). Topologically, residues 288–377 (HAVLISRGET…TAHSASVMAV (90 aa)) are cytoplasmic.

This sequence belongs to the DHHC palmitoyltransferase family. Interacts with ABL1. Interacts with COPS5/JAB1. Widely expressed.

It is found in the endoplasmic reticulum membrane. It catalyses the reaction L-cysteinyl-[protein] + hexadecanoyl-CoA = S-hexadecanoyl-L-cysteinyl-[protein] + CoA. Functionally, palmitoyl acyltransferase that mediates palmitoylation of proteins such as PLN and ZDHHC6. Required during embryonic heart development and cardiac function, possibly by mediating palmitoylation of PLN, thereby affecting PLN phosphorylation and homooligomerization. Also required for eye development. Palmitoylates ZDHHC6, affecting the quaternary assembly of ZDHHC6, its localization, stability and function. May play a role in DNA damage response. May be involved in apoptosis regulation. Involved in the proliferation of neural stem cells by regulating the FGF/ERK pathway. In Homo sapiens (Human), this protein is Palmitoyltransferase ZDHHC16.